A 753-amino-acid polypeptide reads, in one-letter code: 5-methyltetrahydropteroyltriglutamate--homocysteine methyltransferase (753 aa).

5-methyltetrahydropteroyltri-L-glutamate-binding positions include 17–20 (RELK) and K117. L-homocysteine contacts are provided by residues 431–433 (IGS) and E484. L-methionine-binding positions include 431–433 (IGS) and E484. Residues 515–516 (RC) and W561 each bind 5-methyltetrahydropteroyltri-L-glutamate. D599 is a binding site for L-homocysteine. D599 is a binding site for L-methionine. E605 contacts 5-methyltetrahydropteroyltri-L-glutamate. Zn(2+)-binding residues include H641, C643, and E665. The active-site Proton donor is H694. C726 serves as a coordination point for Zn(2+).

The protein belongs to the vitamin-B12 independent methionine synthase family. It depends on Zn(2+) as a cofactor.

The enzyme catalyses 5-methyltetrahydropteroyltri-L-glutamate + L-homocysteine = tetrahydropteroyltri-L-glutamate + L-methionine. It functions in the pathway amino-acid biosynthesis; L-methionine biosynthesis via de novo pathway; L-methionine from L-homocysteine (MetE route): step 1/1. Catalyzes the transfer of a methyl group from 5-methyltetrahydrofolate to homocysteine resulting in methionine formation. The chain is 5-methyltetrahydropteroyltriglutamate--homocysteine methyltransferase from Escherichia fergusonii (strain ATCC 35469 / DSM 13698 / CCUG 18766 / IAM 14443 / JCM 21226 / LMG 7866 / NBRC 102419 / NCTC 12128 / CDC 0568-73).